The chain runs to 502 residues: Galactose/methyl galactoside import ATP-binding protein MglA (502 aa).

ABC transporter domains are found at residues 10–245 (LEMT…VGRE) and 255–502 (NEPK…SRYL). ATP is bound at residue 42-49 (GENGAGKS).

Belongs to the ABC transporter superfamily. Galactose/methyl galactoside importer (TC 3.A.1.2.3) family. As to quaternary structure, the complex is composed of one ATP-binding protein (MglA), two transmembrane proteins (MglC) and a solute-binding protein (MglB).

Its subcellular location is the cell inner membrane. It catalyses the reaction D-galactose(out) + ATP + H2O = D-galactose(in) + ADP + phosphate + H(+). The catalysed reaction is methyl beta-D-galactoside(out) + ATP + H2O = methyl beta-D-galactoside(in) + ADP + phosphate + H(+). Part of the ABC transporter complex MglABC involved in galactose/methyl galactoside import. Responsible for energy coupling to the transport system. This Vibrio cholerae serotype O1 (strain ATCC 39315 / El Tor Inaba N16961) protein is Galactose/methyl galactoside import ATP-binding protein MglA.